A 105-amino-acid chain; its full sequence is Small ribosomal subunit protein uS10 (105 aa).

Belongs to the universal ribosomal protein uS10 family. As to quaternary structure, part of the 30S ribosomal subunit.

Functionally, involved in the binding of tRNA to the ribosomes. This is Small ribosomal subunit protein uS10 from Nostoc punctiforme (strain ATCC 29133 / PCC 73102).